We begin with the raw amino-acid sequence, 276 residues long: Probable ABC transporter permease protein NosY (276 aa).

Helical transmembrane passes span 20 to 40 (WLLAISLLFAVLAVGIAWLGA), 55 to 75 (IASLASLATFLMPLIALLLAY), 111 to 131 (ILALAVLIGFGCAALAIALLV), 146 to 166 (FMISSTLLGWVFLAFAYVLSG), 179 to 199 (LGVWFLFVLVFDLVLLALLVL), and 251 to 271 (VLWLCLLAWIGVSLLLAYAIF).

As to quaternary structure, the complex may be composed of an ATP-binding protein (NosF), a transmembrane protein (NosY) and a solute-binding protein (NosD).

The protein localises to the cell inner membrane. In terms of biological role, required for the assembly of the copper chromophores of nitrous oxide reductase. Could be part of the ABC transporter complex NosDFY. This chain is Probable ABC transporter permease protein NosY, found in Stutzerimonas stutzeri (Pseudomonas stutzeri).